The primary structure comprises 220 residues: uncharacterized protein (220 aa).

The next 7 helical transmembrane spans lie at 6–26, 33–53, 59–79, 103–123, 126–146, 157–177, and 179–199; these read FSIL…LIVW, IVRL…LRGI, ALIA…PWLL, LLIT…VVNL, GVTI…LFVM, AGFL…TAGV, and LIVE…IGVL.

It localises to the cell membrane. This is an uncharacterized protein from Mycobacterium tuberculosis (strain ATCC 25618 / H37Rv).